The chain runs to 422 residues: Mannosylglycerate synthase (422 aa).

GDP-alpha-D-mannose is bound by residues 7–11, Gln-66, Lys-77, Asp-101, and 101–102; these read PFKEE and DS. (R)-glycerate-binding positions include Arg-132 and 137 to 140; that span reads AMIT. GDP-alpha-D-mannose is bound by residues Leu-164, Asp-193, and Tyr-221.

This sequence belongs to the glycosyltransferase 78 family.

It catalyses the reaction (R)-glycerate + GDP-alpha-D-mannose = (2R)-2-O-(alpha-D-mannosyl)-glycerate + GDP + H(+). It carries out the reaction GDP-alpha-D-glucose + (R)-glycerate = (2R)-2-O-(alpha-D-glucopyranosyl)-glycerate + GDP + H(+). Its activity is regulated as follows. Activity is not dependent on divalent cations, but it is enhanced by Mg(2+). Involved in the biosynthesis of the compatible solute alpha-D-mannosyl-glycerate (MG). Catalyzes the condensation of GDP-alpha-D-mannose (GDP-Man) with D-glycerate to produce alpha-D-mannosyl-glycerate. Can also use GDP-alpha-D-glucose (GDP-Glc) as sugar donor to produce alpha-D-glucopyranosyl-glycerate (GG). The chain is Mannosylglycerate synthase from Selaginella moellendorffii (Spikemoss).